We begin with the raw amino-acid sequence, 587 residues long: Arginine--tRNA ligase (587 aa).

The 'HIGH' region motif lies at 127–137; the sequence is PNLAKEMHVGH.

The protein belongs to the class-I aminoacyl-tRNA synthetase family. As to quaternary structure, monomer.

It localises to the cytoplasm. The catalysed reaction is tRNA(Arg) + L-arginine + ATP = L-arginyl-tRNA(Arg) + AMP + diphosphate. The sequence is that of Arginine--tRNA ligase from Pseudomonas aeruginosa (strain LESB58).